The chain runs to 153 residues: Nucleoside diphosphate kinase (153 aa).

ATP contacts are provided by K13, F61, R89, T95, R106, and N116. H119 (pros-phosphohistidine intermediate) is an active-site residue.

Belongs to the NDK family. Homohexamer. It depends on Mg(2+) as a cofactor.

The protein resides in the cytoplasm. The catalysed reaction is a 2'-deoxyribonucleoside 5'-diphosphate + ATP = a 2'-deoxyribonucleoside 5'-triphosphate + ADP. The enzyme catalyses a ribonucleoside 5'-diphosphate + ATP = a ribonucleoside 5'-triphosphate + ADP. Its function is as follows. Major role in the synthesis of nucleoside triphosphates other than ATP. The ATP gamma phosphate is transferred to the NDP beta phosphate via a ping-pong mechanism, using a phosphorylated active-site intermediate. The polypeptide is Nucleoside diphosphate kinase (NDK) (Brugia malayi (Filarial nematode worm)).